We begin with the raw amino-acid sequence, 105 residues long: Platelet factor 4 (105 aa).

The first 29 residues, 1–29 (MSVAAVFRGLRPSPELLLLGLLFLPAVVA), serve as a signal peptide directing secretion. Residue T31 is glycosylated (O-linked (GalNAc...) threonine). Disulfide bonds link C44–C71 and C46–C87. The residue at position 61 (S61) is a Phosphoserine. Residue 96–102 (KKVIKKI) participates in heparin binding.

The protein belongs to the intercrine alpha (chemokine CxC) family. As to quaternary structure, homotetramer. Interacts with TNFAIP6 (via Link domain). Interacts with CCR1. Interacts with CXCR3. Interacts with THBD; this interaction enhances generation of activated protein C.

The protein resides in the secreted. Functionally, chemokine released during platelet aggregation that plays a role in different biological processes including hematopoiesis, cell proliferation, differentiation, and activation. Acts via different functional receptors including CCR1, CXCR3A or CXCR3B. Upon interaction with CXCR3A receptor, induces activated T-lymphocytes migration mediated via downstream Ras/extracellular signal-regulated kinase (ERK) signaling. Neutralizes the anticoagulant effect of heparin by binding more strongly to heparin than to the chondroitin-4-sulfate chains of the carrier molecule. Plays a role in the inhibition of hematopoiesis and in the maintenance of hematopoietic stem cell (HSC) quiescence. Chemotactic for neutrophils and monocytes via CCR1. Inhibits endothelial cell proliferation. In cooperation with toll-like receptor 8/TLR8, induces chromatin remodeling and activates inflammatory gene expression via the TBK1-IRF5 axis. In addition, induces myofibroblast differentiation and collagen synthesis in different precursor cells, including endothelial cells, by stimulating endothelial-to-mesenchymal transition. Interacts with thrombomodulin/THBD to enhance the activation of protein C and thus potentiates its anticoagulant activity. This Mus musculus (Mouse) protein is Platelet factor 4 (Pf4).